We begin with the raw amino-acid sequence, 213 residues long: MNLLIMGLPGAGKGTQAAKIVEEFGVIHISTGDMFRAAMANQTEMGLLAKSYIDKGDLVPDEVTNGIVKERLSQDDIKEKGFLLDGYPRTIDQAHALDATLADLGLKLNGVVNIDVDPNSLVERLSGRIIHKKTGETFHKIFNPPAGDYDENDYYQREDDKPETVKRRLDVNIAQGQPIIDHYRKSGIVHDIQGNQEISEVFVDIKKVIESLA.

An ATP-binding site is contributed by 10-15 (GAGKGT). An NMP region spans residues 30–59 (STGDMFRAAMANQTEMGLLAKSYIDKGDLV). AMP is bound by residues Thr31, Arg36, 57–59 (DLV), 86–89 (GYPR), and Gln93. Residues 127-160 (GRIIHKKTGETFHKIFNPPAGDYDENDYYQREDD) are LID. ATP contacts are provided by residues Arg128 and 137 to 138 (TF). AMP-binding residues include Arg157 and Arg168. Gln196 contributes to the ATP binding site.

The protein belongs to the adenylate kinase family. As to quaternary structure, monomer.

It localises to the cytoplasm. The catalysed reaction is AMP + ATP = 2 ADP. The protein operates within purine metabolism; AMP biosynthesis via salvage pathway; AMP from ADP: step 1/1. Functionally, catalyzes the reversible transfer of the terminal phosphate group between ATP and AMP. Plays an important role in cellular energy homeostasis and in adenine nucleotide metabolism. The polypeptide is Adenylate kinase (Streptococcus uberis (strain ATCC BAA-854 / 0140J)).